The sequence spans 396 residues: 1-deoxy-D-xylulose 5-phosphate reductoisomerase (396 aa).

T15, G16, S17, I18, G41, and N130 together coordinate NADPH. K131 serves as a coordination point for 1-deoxy-D-xylulose 5-phosphate. NADPH is bound at residue E132. D155 serves as a coordination point for Mn(2+). 1-deoxy-D-xylulose 5-phosphate-binding residues include S156, E157, S181, and H204. Mn(2+) is bound at residue E157. G210 serves as a coordination point for NADPH. 1-deoxy-D-xylulose 5-phosphate is bound by residues S217, N222, K223, and E226. E226 contacts Mn(2+).

This sequence belongs to the DXR family. Requires Mg(2+) as cofactor. It depends on Mn(2+) as a cofactor.

It catalyses the reaction 2-C-methyl-D-erythritol 4-phosphate + NADP(+) = 1-deoxy-D-xylulose 5-phosphate + NADPH + H(+). It functions in the pathway isoprenoid biosynthesis; isopentenyl diphosphate biosynthesis via DXP pathway; isopentenyl diphosphate from 1-deoxy-D-xylulose 5-phosphate: step 1/6. Its function is as follows. Catalyzes the NADPH-dependent rearrangement and reduction of 1-deoxy-D-xylulose-5-phosphate (DXP) to 2-C-methyl-D-erythritol 4-phosphate (MEP). The chain is 1-deoxy-D-xylulose 5-phosphate reductoisomerase from Bifidobacterium longum (strain NCC 2705).